The primary structure comprises 664 residues: Chaperone protein dnaK1 (664 aa).

Residue Thr-198 is modified to Phosphothreonine; by autocatalysis.

It belongs to the heat shock protein 70 family.

Functionally, acts as a chaperone. The protein is Chaperone protein dnaK1 (dnaK1) of Prochlorococcus marinus (strain MIT 9313).